The following is a 423-amino-acid chain: Maintenance of mitochondrial morphology protein 1 (423 aa).

Residues 1–20 (MTIPAPIPDKAESSLSFTQG) are Lumenal-facing. Residues 21–41 (LLLGQLSIVILIGAFIKFFIF) traverse the membrane as a helical segment. Topologically, residues 42 to 423 (GDPPSPDVTA…PGSMPGLSMT (382 aa)) are cytoplasmic. The SMP-LTD domain maps to 115-327 (QPESLDWFNV…EPRFQQIELP (213 aa)). Disordered stretches follow at residues 332–372 (RKKN…KEVE) and 387–423 (SLDV…LSMT). Residues 355 to 372 (RSRDVERDLREEARKEVE) are compositionally biased toward basic and acidic residues.

The protein belongs to the MMM1 family. In terms of assembly, homodimer. Component of the ER-mitochondria encounter structure (ERMES) or MDM complex, composed of MMM1, MDM10, MDM12 and MDM34. An MMM1 homodimer associates with one molecule of MDM12 on each side in a pairwise head-to-tail manner, and the SMP-LTD domains of MMM1 and MDM12 generate a continuous hydrophobic tunnel for phospholipid trafficking.

The protein localises to the endoplasmic reticulum membrane. In terms of biological role, component of the ERMES/MDM complex, which serves as a molecular tether to connect the endoplasmic reticulum (ER) and mitochondria. Components of this complex are involved in the control of mitochondrial shape and protein biogenesis, and function in nonvesicular lipid trafficking between the ER and mitochondria. The MDM12-MMM1 subcomplex functions in the major beta-barrel assembly pathway that is responsible for biogenesis of all outer membrane beta-barrel proteins, and acts in a late step after the SAM complex. The MDM10-MDM12-MMM1 subcomplex further acts in the TOM40-specific pathway after the action of the MDM12-MMM1 complex. Essential for establishing and maintaining the structure of mitochondria and maintenance of mtDNA nucleoids. The sequence is that of Maintenance of mitochondrial morphology protein 1 from Botryotinia fuckeliana (strain B05.10) (Noble rot fungus).